The following is a 117-amino-acid chain: MPRVKRGFKARRRRNKVLKLAKGYRGARSKLFRSATEAVDRALNYAFRDRKVKKRDFRALWITRINAASRLNGLSYSKLIHGLKKASVEIDRKVLADLAVSDPQGFSEIASVAKTQI.

Belongs to the bacterial ribosomal protein bL20 family.

Its function is as follows. Binds directly to 23S ribosomal RNA and is necessary for the in vitro assembly process of the 50S ribosomal subunit. It is not involved in the protein synthesizing functions of that subunit. The chain is Large ribosomal subunit protein bL20 from Geobacter metallireducens (strain ATCC 53774 / DSM 7210 / GS-15).